Consider the following 3010-residue polypeptide: Probable polyketide synthase 2 (3010 aa).

Positions 9–432 (SRDVAVIGIG…GSNACLLLSE (424 aa)) constitute a Ketosynthase family 3 (KS3) domain. Catalysis depends on for beta-ketoacyl synthase activity residues Cys-174, His-313, and His-353. Residues 629–662 (GINPSINVGHSFGEISSACCSGMLDLETACFIVY) are acyl/malonyl transferase. The active-site For acyl/malonyl transferase activity is the Ser-639. An N-terminal hotdog fold region spans residues 944–1063 (ATQLGYRNDV…ARFSVLKHNS (120 aa)). Residues 944 to 1235 (ATQLGYRNDV…YSSISTDIKN (292 aa)) enclose the PKS/mFAS DH domain. The active-site Proton acceptor; for dehydratase activity is His-976. A C-terminal hotdog fold region spans residues 1080 to 1235 (NWTTIKRKEF…YSSISTDIKN (156 aa)). Asp-1146 acts as the Proton donor; for dehydratase activity in catalysis. A Carrier domain is found at 2482–2559 (DNELSIRDDI…QLIQAVIQAV (78 aa)). An O-(pantetheine 4'-phosphoryl)serine modification is found at Ser-2519.

Requires pantetheine 4'-phosphate as cofactor.

Probable polyketide synthase. The polypeptide is Probable polyketide synthase 2 (pks2) (Dictyostelium discoideum (Social amoeba)).